The sequence spans 422 residues: Inhibitory synaptic factor 2A (422 aa).

Residues 143-163 (FLADSKEKSEAGPMEEPRPCS) form a disordered region. The span at 146-160 (DSKEKSEAGPMEEPR) shows a compositional bias: basic and acidic residues. Ser177 carries the post-translational modification Phosphoserine. Residues 344–370 (TEVVDLKAQLQVMENLISSSQETIKVL) are a coiled coil.

This sequence belongs to the INSYN2 family. Interacts with GPHN.

The protein localises to the postsynaptic density. Its function is as follows. Component of the protein machinery at the inhibitory synapses, probably acting as a scaffold. Inhibitory synapses dampen neuronal activity through postsynaptic hyperpolarization. This synaptic inhibition is fundamental for the functioning of the central nervous system, shaping and orchestrating the flow of information through neuronal networks to generate a precise neural code. The protein is Inhibitory synaptic factor 2A of Mus musculus (Mouse).